The sequence spans 2224 residues: Protein sidekick (2224 aa).

An N-terminal signal peptide occupies residues 1-47 (MLKSAASSLRRRRPKTTITATLAIEMPSQPKLASLLAVLVLLCYCDS). Residues 48-2001 (CFFCYADANL…LQHKPFYRQT (1954 aa)) lie on the Extracellular side of the membrane. An Ig-like C2-type 1 domain is found at 72 to 155 (PRFTTHPSSS…SIFSEKSDVV (84 aa)). Cysteines 95 and 138 form a disulfide. N-linked (GlcNAc...) asparagine glycans are attached at residues N164, N250, N318, and N327. 4 Ig-like C2-type domains span residues 261-355 (PEII…ARLQ), 359-445 (PPLF…NSAS), 455-541 (PIME…AYLS), and 546-636 (TQII…ARLS). Cystine bridges form between C283–C336 and C382–C433. Residues N463, N485, and N491 are each glycosylated (N-linked (GlcNAc...) asparagine). 2 disulfides stabilise this stretch: C476/C525 and C567/C620. N-linked (GlcNAc...) asparagine glycosylation is found at N628, N661, N707, N809, N870, N942, N1019, N1094, N1109, N1172, N1203, N1282, N1329, N1379, N1414, and N1420. 13 consecutive Fibronectin type-III domains span residues 643-753 (PPSN…LPQE), 758-855 (PPVG…TKEG), 860-967 (PPTN…TMDD), 971-1065 (EVTG…VEPV), 1069-1164 (APTA…TIQA), 1169-1270 (PPFN…TREA), 1275-1372 (GPLD…TFED), 1376-1469 (VPSN…TNNR), 1474-1570 (APSV…TLPA), 1575-1677 (GVGG…VGEA), 1682-1785 (EPRA…TLPG), 1789-1883 (APLH…GPQD), and 1885-1984 (SPVA…TPSK). N-linked (GlcNAc...) asparagine glycosylation is found at N1843 and N1876. A helical membrane pass occupies residues 2002 to 2022 (WFMVSLAATSIVIIVMVIAVL). Residues 2023–2224 (CVKSKSYKYK…APLPGFSSFV (202 aa)) are Cytoplasmic-facing. 2 disordered regions span residues 2068–2157 (TLNS…RSDP) and 2171–2195 (LRQS…PEGS). Phosphoserine is present on S2071. Over residues 2073 to 2085 (GTLRSGTLGTLGR) the composition is skewed to low complexity. The residue at position 2074 (T2074) is a Phosphothreonine. 2 stretches are compositionally biased toward basic and acidic residues: residues 2112–2122 (HSDEESLKCYD) and 2144–2157 (QHSE…RSDP). A phosphoserine mark is found at S2113 and S2117.

Belongs to the sidekick family.

It localises to the membrane. In terms of biological role, participates in homotypic or heterotypic interactions in the eye during pattern formation to prevent extra cells from joining the precluster and differentiating as photoreceptor cells. This Drosophila melanogaster (Fruit fly) protein is Protein sidekick.